The sequence spans 367 residues: MDMSGAGDRRSGAVRTWLYVVAALVVAMVAVGGATRLTGSGLSITEWRPVTGAIPPLTEADWAAEFAKYRDTPQYNILNQGMGLSAFKVLYGWEWGHRLLGRVIGLVFFLPLILFWWQGRISRRLGLGLLGLGLLGGLQGAIGWIMVASGLQPGMTAVAPLKLALHLTTASLILAGLVWLAAGERRGVLAPAPARLRATALLLPILVLVQIFLGGLVAGSHAGLVYNTWPTMDGQLVPPLDSLFAIRPWIENFVDNHALVQFDHRVTAYLVFVVAVLHAVDARLTGPKSAAGRAAGVVILVLAQMALGIATLLLAVPLWAALAHQVLAMAVLTMATVHARLSRGFGLVEPAAAEPPLGFEGLAGGRI.

The next 5 membrane-spanning stretches (helical) occupy residues 12–32 (GAVR…VAVG), 99–119 (LLGR…WWQG), 127–147 (LGLL…WIMV), 163–183 (LALH…LAAG), and 198–218 (ATAL…GLVA). A heme-binding site is contributed by histidine 264. 3 consecutive transmembrane segments (helical) span residues 266-286 (VTAY…RLTG), 296-316 (GVVI…LLAV), and 317-337 (PLWA…MATV). Histidine 324 is a heme binding site.

Belongs to the COX15/CtaA family. Type 2 subfamily. Interacts with CtaB. The cofactor is heme b.

The protein resides in the cell membrane. It catalyses the reaction Fe(II)-heme o + 2 A + H2O = Fe(II)-heme a + 2 AH2. Its pathway is porphyrin-containing compound metabolism; heme A biosynthesis; heme A from heme O: step 1/1. Functionally, catalyzes the conversion of heme O to heme A by two successive hydroxylations of the methyl group at C8. The first hydroxylation forms heme I, the second hydroxylation results in an unstable dihydroxymethyl group, which spontaneously dehydrates, resulting in the formyl group of heme A. This Methylobacterium radiotolerans (strain ATCC 27329 / DSM 1819 / JCM 2831 / NBRC 15690 / NCIMB 10815 / 0-1) protein is Heme A synthase.